The following is a 104-amino-acid chain: Large ribosomal subunit protein bL28 (104 aa).

The protein belongs to the bacterial ribosomal protein bL28 family.

This chain is Large ribosomal subunit protein bL28, found in Wolbachia pipientis wMel.